Consider the following 459-residue polypeptide: Probable Delta(5) fatty acid desaturase C (459 aa).

One can recognise a Cytochrome b5 heme-binding domain in the interval 9 to 87 (KKLYSWKEIS…LKQYEIGQVS (79 aa)). The heme site is built by His45 and His68. The next 2 membrane-spanning stretches (helical) occupy residues 121 to 141 (FAFG…TSYY) and 151 to 171 (FYLN…FSLH). A Histidine box-1 motif is present at residues 174–178 (HDACH). Residues 187–207 (VWKWLGATYDLFIGASFFYWC) traverse the membrane as a helical segment. Positions 210-215 (HVIGHH) match the Histidine box-2 motif. 2 consecutive transmembrane segments (helical) span residues 289 to 309 (FEII…FIIP) and 315 to 335 (LVNL…YLSF). Residues 394-398 (QVVHH) carry the Histidine box-3 motif.

Belongs to the fatty acid desaturase type 1 family. Fe cation serves as cofactor.

It is found in the membrane. The polypeptide is Probable Delta(5) fatty acid desaturase C (Dictyostelium discoideum (Social amoeba)).